Here is a 285-residue protein sequence, read N- to C-terminus: uncharacterized protein (285 aa).

One can recognise a Guanylate cyclase domain in the interval 92–199; it reads TLLLADVEES…PTINRTARLR (108 aa).

Belongs to the adenylyl cyclase class-4/guanylyl cyclase family.

This is an uncharacterized protein from Mycobacterium tuberculosis (strain ATCC 25618 / H37Rv).